The chain runs to 291 residues: Phosphate import ATP-binding protein PstB (291 aa).

An ABC transporter domain is found at 44–286 (VKAREVNVFY…PEEKRTQDYI (243 aa)). 76–83 (GPSGCGKS) serves as a coordination point for ATP.

Belongs to the ABC transporter superfamily. Phosphate importer (TC 3.A.1.7) family. In terms of assembly, the complex is composed of two ATP-binding proteins (PstB), two transmembrane proteins (PstC and PstA) and a solute-binding protein (PstS).

The protein resides in the cell inner membrane. The enzyme catalyses phosphate(out) + ATP + H2O = ADP + 2 phosphate(in) + H(+). Its function is as follows. Part of the ABC transporter complex PstSACB involved in phosphate import. Responsible for energy coupling to the transport system. This Chelativorans sp. (strain BNC1) protein is Phosphate import ATP-binding protein PstB.